The sequence spans 839 residues: Taste receptor type 1 member 2 (839 aa).

An N-terminal signal peptide occupies residues 1-19 (MGPRAKTISSLFFLLWVLA). The Extracellular portion of the chain corresponds to 20–566 (EPAENSDFYL…VFLEWHEAPT (547 aa)). N-linked (GlcNAc...) asparagine glycosylation is found at Asn-84, Asn-248, Asn-292, Asn-312, Asn-368, Asn-428, Asn-487, and Asn-527. Residues 567 to 587 (IAVALLAALGFLSTLAILVIF) form a helical membrane-spanning segment. At 588-602 (WRHFQTPIVRSAGGP) the chain is on the cytoplasmic side. The chain crosses the membrane as a helical span at residues 603 to 623 (MCFLMLTLLLVAYMVVPVYVG). The Extracellular portion of the chain corresponds to 624-635 (PPKVSTCLCRQA). A helical membrane pass occupies residues 636–656 (LFPLCFTICISCIAVRSFQIV). Topologically, residues 657-681 (CAFKMASRFPRAYSYWVRYQGPYVS) are cytoplasmic. The chain crosses the membrane as a helical span at residues 682-702 (MAFITVLKMVIVVIGMLATGL). Residues 703–727 (SPTTRTDPDDPKITIVSCNPNYRNS) lie on the Extracellular side of the membrane. The chain crosses the membrane as a helical span at residues 728–748 (LLFNTSLDLLLSVVGFSFAYM). Topologically, residues 749–760 (GKELPTNYNEAK) are cytoplasmic. Residues 761 to 781 (FITLSMTFYFTSSVSLCTFMS) traverse the membrane as a helical segment. The Extracellular portion of the chain corresponds to 782–784 (AYS). A helical membrane pass occupies residues 785–805 (GVLVTIVDLLVTVLNLLAISL). At 806–839 (GYFGPKCYMILFYPERNTPAYFNSMIQGYTMRRD) the chain is on the cytoplasmic side.

The protein belongs to the G-protein coupled receptor 3 family. TAS1R subfamily. Forms heterodimers with TAS1R3.

The protein localises to the cell membrane. Functionally, putative taste receptor. TAS1R2/TAS1R3 recognizes diverse natural and synthetic sweeteners. This is Taste receptor type 1 member 2 (TAS1R2) from Homo sapiens (Human).